The following is a 333-amino-acid chain: tRNA (guanine(37)-N(1))/4-demethylwyosine(37)-methyltransferase Taw22 (333 aa).

S-adenosyl-L-methionine contacts are provided by residues R174, F191, E213 to I214, and D243 to V244.

Belongs to the class I-like SAM-binding methyltransferase superfamily. TRM5/TYW2 family.

Its subcellular location is the cytoplasm. The enzyme catalyses guanosine(37) in tRNA + S-adenosyl-L-methionine = N(1)-methylguanosine(37) in tRNA + S-adenosyl-L-homocysteine + H(+). It catalyses the reaction 4-demethylwyosine(37) in tRNA(Phe) + S-adenosyl-L-methionine = isowyosine(37) in tRNA(Phe) + S-adenosyl-L-homocysteine + H(+). In terms of biological role, catalyzes both the N1-methylation of guanosine and the C7-methylation of 4-demethylwyosine (imG-14) at position 37 in tRNA(Phe). This Pyrococcus abyssi (strain GE5 / Orsay) protein is tRNA (guanine(37)-N(1))/4-demethylwyosine(37)-methyltransferase Taw22.